The primary structure comprises 251 residues: Probable inactive cytidine deaminase 4 (251 aa).

Residue 61–63 (NVE) participates in substrate binding. Glutamate 76 (proton donor) is an active-site residue. The 116-residue stretch at 136 to 251 (EHCSHLKCRA…VFRCHKTAEN (116 aa)) folds into the CMP/dCMP-type deaminase domain.

It belongs to the cytidine and deoxycytidylate deaminase family. Homodimer.

In Arabidopsis thaliana (Mouse-ear cress), this protein is Probable inactive cytidine deaminase 4 (CDA4).